The sequence spans 287 residues: NAD kinase (287 aa).

The Proton acceptor role is filled by D56. Residues 56 to 57 (DG), R61, 128 to 129 (ND), and D156 contribute to the NAD(+) site.

The protein belongs to the NAD kinase family. It depends on a divalent metal cation as a cofactor.

It localises to the cytoplasm. It catalyses the reaction NAD(+) + ATP = ADP + NADP(+) + H(+). In terms of biological role, involved in the regulation of the intracellular balance of NAD and NADP, and is a key enzyme in the biosynthesis of NADP. Catalyzes specifically the phosphorylation on 2'-hydroxyl of the adenosine moiety of NAD to yield NADP. This Thermomicrobium roseum (strain ATCC 27502 / DSM 5159 / P-2) protein is NAD kinase.